The primary structure comprises 116 residues: SPbeta prophage-derived uncharacterized protein YoqA (116 aa).

The chain is SPbeta prophage-derived uncharacterized protein YoqA (yoqA) from Bacillus subtilis (strain 168).